The following is a 443-amino-acid chain: Cysteine proteinase B (443 aa).

The first 27 residues, 1–27 (MATSRAALCAVAVVCVVLAAACAPARA), serve as a signal peptide directing secretion. Residues 28-125 (IHVGTPAAAL…YRKARADLSA (98 aa)) constitute a propeptide, activation peptide. 2 disulfides stabilise this stretch: cysteine 147–cysteine 188 and cysteine 181–cysteine 226. The active site involves cysteine 150. Asparagine 228 is a glycosylation site (N-linked (GlcNAc...) asparagine). Cysteine 281 and cysteine 329 are joined by a disulfide. Residues histidine 288 and asparagine 308 contribute to the active site.

Belongs to the peptidase C1 family.

This is Cysteine proteinase B (LMCPB) from Leishmania mexicana.